A 301-amino-acid polypeptide reads, in one-letter code: Protein FdhE homolog (301 aa).

The protein belongs to the FdhE family.

The protein localises to the cytoplasm. Functionally, necessary for formate dehydrogenase activity. The sequence is that of Protein FdhE homolog from Shewanella baltica (strain OS185).